Here is a 127-residue protein sequence, read N- to C-terminus: Small ribosomal subunit protein uS13 (127 aa).

The tract at residues 90–127 is disordered; it reads RRHRQGLPVRGQRTRTNARTRRGRRVTVAGKKKAPSKK. Residues 101 to 127 are compositionally biased toward basic residues; it reads QRTRTNARTRRGRRVTVAGKKKAPSKK.

The protein belongs to the universal ribosomal protein uS13 family. In terms of assembly, part of the 30S ribosomal subunit. Forms a loose heterodimer with protein S19. Forms two bridges to the 50S subunit in the 70S ribosome.

Its function is as follows. Located at the top of the head of the 30S subunit, it contacts several helices of the 16S rRNA. In the 70S ribosome it contacts the 23S rRNA (bridge B1a) and protein L5 of the 50S subunit (bridge B1b), connecting the 2 subunits; these bridges are implicated in subunit movement. Contacts the tRNAs in the A and P-sites. This Rippkaea orientalis (strain PCC 8801 / RF-1) (Cyanothece sp. (strain PCC 8801)) protein is Small ribosomal subunit protein uS13.